The following is a 576-amino-acid chain: MPALSSRSGSEMGLYELLSVLPSQLQPHVESPDDRSFLHAMFGERSLHSLVKIHEKLQCYEDCAPTPVLDSAGSLAADLTEELQARSASNEIRELVKLLSKPHVKSLLSVHDTVAKKSYDPELPPLPDDIDDEEDSVKIIRLVKNKEPLGATIKKDEHTGAILVARILRGGAADRSGLIHVGDELKEVNGIPVDDKKPEEIIRILSQSQGAITFKVVPGIKDEAQSKEPKMFIKALFDYNPAEDKAIPCKEAGLGFKKGDILQVMSQDDATWWQAKLEGDGNLRAGLIPSKHFQERRLAVWRPTPVMTLQRTSSKRFSGLRRSFRLSRRDKKTNKSMYECKKSEQYDTADVPTYEEVTTYRRKHGDRHRLVVLVGPTGVGLNELKRKLLISDTQHFSVTIPHTSRSKRHQESEGVEYHFISKNLFEADIQNNKFIEHGEYKGNYYGTSFDSVRSVLSKNKVCLLDVQPHTLKHLRTAEFKPYVVFVKPPCIERLRETRRNAKVISGKDDKTSSKAFSEEDFLEMISASQMMENQYGHLFEKVIVNDDLTVAFSELKQALKKVETEAHWVPISWTHS.

L27 domains follow at residues 10-64 and 65-122; these read SEMG…EDCA and PTPV…YDPE. In terms of domain architecture, PDZ spans 139-220; it reads IIRLVKNKEP…AITFKVVPGI (82 aa). In terms of domain architecture, SH3 spans 228–298; that stretch reads EPKMFIKALF…PSKHFQERRL (71 aa). The 193-residue stretch at 368-560 folds into the Guanylate kinase-like domain; that stretch reads HRLVVLVGPT…AFSELKQALK (193 aa).

Belongs to the MAGUK family.

The protein localises to the membrane. Its subcellular location is the cell junction. It localises to the tight junction. It is found in the adherens junction. In terms of biological role, acts as an important adapter that promotes epithelial cell polarity and tight junction formation. Involved in the assembly of protein complexes at sites of cell-cell contact. This Danio rerio (Zebrafish) protein is MAGUK p55 subfamily member 7 (mpp7).